The chain runs to 93 residues: Small ribosomal subunit protein uS19 (93 aa).

This sequence belongs to the universal ribosomal protein uS19 family.

In terms of biological role, protein S19 forms a complex with S13 that binds strongly to the 16S ribosomal RNA. This chain is Small ribosomal subunit protein uS19, found in Leptospira interrogans serogroup Icterohaemorrhagiae serovar copenhageni (strain Fiocruz L1-130).